A 192-amino-acid polypeptide reads, in one-letter code: GTP-dependent dephospho-CoA kinase (192 aa).

Positions 49, 50, 51, 68, 70, and 127 each coordinate GTP.

It belongs to the GTP-dependent DPCK family.

The catalysed reaction is 3'-dephospho-CoA + GTP = GDP + CoA + H(+). The protein operates within cofactor biosynthesis; coenzyme A biosynthesis. Functionally, catalyzes the GTP-dependent phosphorylation of the 3'-hydroxyl group of dephosphocoenzyme A to form coenzyme A (CoA). The protein is GTP-dependent dephospho-CoA kinase of Halorubrum lacusprofundi (strain ATCC 49239 / DSM 5036 / JCM 8891 / ACAM 34).